The chain runs to 173 residues: MKKQIIYPDFITRIFSTALDLSLVAFIAIPISQFCFFNLLWLFFHDYFLSIKINIHNSNEMFNSIMSQEFYEYLKLGNFNKYILFNILIFATNILVICSYFITFWYYKGTTLSKMFLRMKIVDAVTLNRPTLKQLIKRFLAYITFPIGIFFILFSSKKQALHDRIAGTVVIKS.

3 helical membrane passes run 24–44, 82–102, and 135–155; these read VAFI…WLFF, YILF…SYFI, and LIKR…ILFS.

It localises to the cell membrane. This is an uncharacterized protein from Rickettsia prowazekii (strain Madrid E).